The chain runs to 285 residues: Energy-coupling factor transporter ATP-binding protein EcfA2 (285 aa).

Positions 3–245 constitute an ABC transporter domain; it reads IKIENLNHIY…VETLEKIGLA (243 aa). 40 to 47 is a binding site for ATP; it reads GHTGSGKS.

This sequence belongs to the ABC transporter superfamily. Energy-coupling factor EcfA family. In terms of assembly, forms a stable energy-coupling factor (ECF) transporter complex composed of 2 membrane-embedded substrate-binding proteins (S component), 2 ATP-binding proteins (A component) and 2 transmembrane proteins (T component).

The protein localises to the cell membrane. ATP-binding (A) component of a common energy-coupling factor (ECF) ABC-transporter complex. Unlike classic ABC transporters this ECF transporter provides the energy necessary to transport a number of different substrates. This Clostridium perfringens (strain 13 / Type A) protein is Energy-coupling factor transporter ATP-binding protein EcfA2.